A 183-amino-acid chain; its full sequence is Translation initiation factor IF-3 (183 aa).

The protein belongs to the IF-3 family. In terms of assembly, monomer.

Its subcellular location is the cytoplasm. Functionally, IF-3 binds to the 30S ribosomal subunit and shifts the equilibrium between 70S ribosomes and their 50S and 30S subunits in favor of the free subunits, thus enhancing the availability of 30S subunits on which protein synthesis initiation begins. This Azobacteroides pseudotrichonymphae genomovar. CFP2 protein is Translation initiation factor IF-3.